Consider the following 106-residue polypeptide: UPF0060 membrane protein Mrad2831_0929 (106 aa).

Helical transmembrane passes span 3-23 (LLAY…FWAW), 30-50 (AWWT…LTLV), 59-79 (FAAY…LAEG), and 87-104 (LAGS…LLGR).

The protein belongs to the UPF0060 family.

Its subcellular location is the cell inner membrane. The chain is UPF0060 membrane protein Mrad2831_0929 from Methylobacterium radiotolerans (strain ATCC 27329 / DSM 1819 / JCM 2831 / NBRC 15690 / NCIMB 10815 / 0-1).